Consider the following 193-residue polypeptide: Thymidylate kinase (193 aa).

Residue 7-14 (GIDGCGKS) participates in ATP binding.

Belongs to the thymidylate kinase family.

The catalysed reaction is dTMP + ATP = dTDP + ADP. Phosphorylation of dTMP to form dTDP in both de novo and salvage pathways of dTTP synthesis. This chain is Thymidylate kinase, found in Coprothermobacter proteolyticus (strain ATCC 35245 / DSM 5265 / OCM 4 / BT).